A 301-amino-acid polypeptide reads, in one-letter code: Glycine--tRNA ligase alpha subunit (301 aa).

It belongs to the class-II aminoacyl-tRNA synthetase family. In terms of assembly, tetramer of two alpha and two beta subunits.

It is found in the cytoplasm. It catalyses the reaction tRNA(Gly) + glycine + ATP = glycyl-tRNA(Gly) + AMP + diphosphate. The polypeptide is Glycine--tRNA ligase alpha subunit (Variovorax paradoxus (strain S110)).